The following is a 477-amino-acid chain: Aryl-phospho-beta-D-glucosidase BglC (477 aa).

The active-site Proton donor is glutamate 170. Catalysis depends on glutamate 378, which acts as the Nucleophile.

Belongs to the glycosyl hydrolase 1 family.

The catalysed reaction is 6-phospho-beta-D-glucosyl-(1-&gt;4)-D-glucose + H2O = D-glucose 6-phosphate + D-glucose. Is able to catalyze the hydrolysis of aryl-phospho-beta-D-glucosides such as 4-methylumbelliferyl-phospho-beta-D-glucopyranoside (MUG-P), phosphoarbutin and phosphosalicin. Is not essential for growth on arbutin and salicin as the sole carbon source. In Bacillus subtilis (strain 168), this protein is Aryl-phospho-beta-D-glucosidase BglC (bglC).